A 396-amino-acid chain; its full sequence is Probable tRNA sulfurtransferase (396 aa).

A THUMP domain is found at 63–166; that stretch reads AAAARASARV…GRRAYFFDTI (104 aa). Residues 184–185, arginine 266, glycine 288, and glutamine 297 contribute to the ATP site; that span reads LY.

The protein belongs to the ThiI family.

It is found in the cytoplasm. The catalysed reaction is [ThiI sulfur-carrier protein]-S-sulfanyl-L-cysteine + a uridine in tRNA + 2 reduced [2Fe-2S]-[ferredoxin] + ATP + H(+) = [ThiI sulfur-carrier protein]-L-cysteine + a 4-thiouridine in tRNA + 2 oxidized [2Fe-2S]-[ferredoxin] + AMP + diphosphate. The enzyme catalyses [ThiS sulfur-carrier protein]-C-terminal Gly-Gly-AMP + S-sulfanyl-L-cysteinyl-[cysteine desulfurase] + AH2 = [ThiS sulfur-carrier protein]-C-terminal-Gly-aminoethanethioate + L-cysteinyl-[cysteine desulfurase] + A + AMP + 2 H(+). Its pathway is cofactor biosynthesis; thiamine diphosphate biosynthesis. In terms of biological role, catalyzes the ATP-dependent transfer of a sulfur to tRNA to produce 4-thiouridine in position 8 of tRNAs, which functions as a near-UV photosensor. Also catalyzes the transfer of sulfur to the sulfur carrier protein ThiS, forming ThiS-thiocarboxylate. This is a step in the synthesis of thiazole, in the thiamine biosynthesis pathway. The sulfur is donated as persulfide by IscS. The chain is Probable tRNA sulfurtransferase from Aeropyrum pernix (strain ATCC 700893 / DSM 11879 / JCM 9820 / NBRC 100138 / K1).